Reading from the N-terminus, the 201-residue chain is Glutathione peroxidase 1 (201 aa).

Ser32 bears the Phosphoserine mark. The active site involves Sec47. Sec47 is a non-standard amino acid (selenocysteine). Residues Lys86, Lys112, and Lys146 each carry the N6-acetyllysine; alternate modification. Residues Lys86, Lys112, and Lys146 each carry the N6-succinyllysine; alternate modification. Ser195 and Ser199 each carry phosphoserine.

The protein belongs to the glutathione peroxidase family. As to quaternary structure, homotetramer. Interacts with MIEN1. During periods of oxidative stress, Sec-47 may react with a superoxide radical, irreversibly lose hydroselenide and be converted to dehydroalanine.

The protein resides in the cytoplasm. It catalyses the reaction 2 glutathione + H2O2 = glutathione disulfide + 2 H2O. The enzyme catalyses (12S)-hydroperoxy-(5Z,8Z,10E,14Z)-eicosatetraenoate + 2 glutathione = (12S)-hydroxy-(5Z,8Z,10E,14Z)-eicosatetraenoate + glutathione disulfide + H2O. Functionally, protects the hemoglobin in erythrocytes from oxidative breakdown. In platelets, plays a crucial role of glutathione peroxidase in the arachidonic acid metabolism. The sequence is that of Glutathione peroxidase 1 (GPX1) from Hylobates lar (Lar gibbon).